The sequence spans 579 residues: DBIRD complex subunit ZNF326 (579 aa).

The tract at residues 1–124 is mediates transcriptional activation; it reads MDFEDDYTHS…YRNSLDSFGG (124 aa). Phosphoserine occurs at positions 48, 56, 63, 69, 81, 82, 91, 106, 114, 118, 121, and 137. A Glycyl lysine isopeptide (Lys-Gly) (interchain with G-Cter in SUMO2) cross-link involves residue Lys-140. Positions 154-194 are disordered; sequence YSSYSSFSSPHMKPAPVGSRGRGTPAYPESTFGSRNYDAFG. Arg-173 is subject to Omega-N-methylarginine. Ser-212 carries the phosphoserine modification. Omega-N-methylarginine is present on Arg-235. Positions 238–260 match the Bipartite nuclear localization signal motif; that stretch reads KRKMIQPFNKPGGTFIKKPKLAK. A Glycyl lysine isopeptide (Lys-Gly) (interchain with G-Cter in SUMO2) cross-link involves residue Lys-240. An N6-acetyllysine; alternate modification is found at Lys-247. A Glycyl lysine isopeptide (Lys-Gly) (interchain with G-Cter in SUMO2); alternate cross-link involves residue Lys-247. The interval 248-302 is disordered; that stretch reads PGGTFIKKPKLAKPVEKMSLSKSPTKTDPKNEEEEKRRIEARREKQRRRREKNSE. Thr-251 bears the Phosphothreonine mark. Glycyl lysine isopeptide (Lys-Gly) (interchain with G-Cter in SUMO2) cross-links involve residues Lys-254 and Lys-264. Ser-270 carries the phosphoserine modification. Basic and acidic residues predominate over residues 272–290; sequence TKTDPKNEEEEKRRIEARR. Residues 314-336 form a C2H2 AKAP95-type 1 zinc finger; the sequence is CSFCKFRTFEEKDIELHLESASH. Lys-401 participates in a covalent cross-link: Glycyl lysine isopeptide (Lys-Gly) (interchain with G-Cter in SUMO2). Residues 407–430 form a C2H2 AKAP95-type 2 zinc finger; the sequence is CSACSVYIPALHSSVQQHLKSPDH. Glycyl lysine isopeptide (Lys-Gly) (interchain with G-Cter in SUMO2) cross-links involve residues Lys-459 and Lys-467. Residues 470–579 form a disordered region; sequence NPFEIQDHSQ…GFSVDQAEEN (110 aa). Acidic residues-rich tracts occupy residues 483 to 520, 529 to 541, and 549 to 565; these read IEGD…EEVG, GDTE…EGEG, and GEGE…EEAK.

Belongs to the AKAP95 family. In terms of assembly, component of the DBIRD complex. Interacts with CCAR2; the interaction is direct.

It localises to the nucleus matrix. Functionally, core component of the DBIRD complex, a multiprotein complex that acts at the interface between core mRNP particles and RNA polymerase II (RNAPII) and integrates transcript elongation with the regulation of alternative splicing: the DBIRD complex affects local transcript elongation rates and alternative splicing of a large set of exons embedded in (A + T)-rich DNA regions. May play a role in neuronal differentiation and is able to bind DNA and activate expression in vitro. In Bos taurus (Bovine), this protein is DBIRD complex subunit ZNF326 (ZNF326).